We begin with the raw amino-acid sequence, 148 residues long: NADH-quinone oxidoreductase subunit K 2 (148 aa).

Helical transmembrane passes span 3 to 23 (LAYPAVLAALLFCVGLYGVLA), 28 to 48 (ILVLMSVELMLNAVNLNLVAF), and 64 to 84 (LFTIAIAAAEIGIGLAIVLAV). Residues 96 to 148 (LRDTAETDAAETLPDDAGTGPSGTDAAPNGDTTTATGRPGDNAGKNKKAEATR) form a disordered region.

Belongs to the complex I subunit 4L family. NDH-1 is composed of 14 different subunits. Subunits NuoA, H, J, K, L, M, N constitute the membrane sector of the complex.

The protein resides in the cell membrane. It catalyses the reaction a quinone + NADH + 5 H(+)(in) = a quinol + NAD(+) + 4 H(+)(out). Functionally, NDH-1 shuttles electrons from NADH, via FMN and iron-sulfur (Fe-S) centers, to quinones in the respiratory chain. The immediate electron acceptor for the enzyme in this species is believed to be a menaquinone. Couples the redox reaction to proton translocation (for every two electrons transferred, four hydrogen ions are translocated across the cytoplasmic membrane), and thus conserves the redox energy in a proton gradient. The chain is NADH-quinone oxidoreductase subunit K 2 from Streptomyces griseus subsp. griseus (strain JCM 4626 / CBS 651.72 / NBRC 13350 / KCC S-0626 / ISP 5235).